Here is a 166-residue protein sequence, read N- to C-terminus: Sec-independent protein translocase protein TatB (166 aa).

The chain crosses the membrane as a helical span at residues 2 to 22; sequence FDGIGFMELLLIGVLGLVVLG. Positions 69-166 are disordered; sequence SKGLSNLSPE…DTRSNPKANG (98 aa). Composition is skewed to polar residues over residues 88–97 and 112–132; these read QAAQSVNRPY and QIHSPVASTVQTSPAQASQAN. Residues 133 to 153 are compositionally biased toward low complexity; it reads PTATVEASPTSASPATPSEPS. Residues 155–166 are compositionally biased toward polar residues; the sequence is GADTRSNPKANG.

Belongs to the TatB family. As to quaternary structure, the Tat system comprises two distinct complexes: a TatABC complex, containing multiple copies of TatA, TatB and TatC subunits, and a separate TatA complex, containing only TatA subunits. Substrates initially bind to the TatABC complex, which probably triggers association of the separate TatA complex to form the active translocon.

The protein localises to the cell inner membrane. Part of the twin-arginine translocation (Tat) system that transports large folded proteins containing a characteristic twin-arginine motif in their signal peptide across membranes. Together with TatC, TatB is part of a receptor directly interacting with Tat signal peptides. TatB may form an oligomeric binding site that transiently accommodates folded Tat precursor proteins before their translocation. The polypeptide is Sec-independent protein translocase protein TatB (Shewanella baltica (strain OS223)).